A 45-amino-acid polypeptide reads, in one-letter code: MKSQAFFLLFLVVLLLATTQSEAFLGALLSKIFGKRSLRDVDTMK.

A signal peptide spans 1-23 (MKSQAFFLLFLVVLLLATTQSEA). Residue phenylalanine 33 is modified to Phenylalanine amide. Residues 37–45 (SLRDVDTMK) constitute a propeptide that is removed on maturation.

This sequence belongs to the non-disulfide-bridged peptide (NDBP) superfamily. Short antimicrobial peptide (group 4) family. Expressed by the venom gland.

Its subcellular location is the secreted. The protein resides in the target cell membrane. Amphipathic peptide that shows antibacterial activities. The chain is Amphipathic peptide Hj0164 from Hottentotta judaicus (Black scorpion).